The chain runs to 376 residues: C2H2 type master regulator of conidiophore development brlA (376 aa).

Positions 20 to 29 are enriched in low complexity; that stretch reads TSFSSASSSA. Disordered stretches follow at residues 20-47, 197-229, and 241-267; these read TSFS…ELSL, HHHH…ASPN, and EAQR…PESG. Polar residues predominate over residues 34-44; the sequence is TPSSRRSTPNE. The span at 197-209 shows a compositional bias: basic residues; that stretch reads HHHHHNHHQHHHA. Residues 219-229 are compositionally biased toward polar residues; the sequence is QLHSNTGASPN. Basic and acidic residues predominate over residues 241–256; that stretch reads EAQRKTSELQRAQIRE. The C2H2-type 1; degenerate zinc-finger motif lies at 277–301; sequence CKCDYPGCNKAFRRNEHLKRHKQTF. Residues 309–332 form a C2H2-type 2 zinc finger; it reads FSCEFCGKDQFNRQDNLNNHRKLH. The tract at residues 351–376 is disordered; sequence IIEHEERSRKRRAPPKSKAEKRDYDF. The segment covering 367 to 376 has biased composition (basic and acidic residues); it reads SKAEKRDYDF.

The protein localises to the nucleus. Its function is as follows. BrlA, abaA and wetA are pivotal regulators of conidiophore development and conidium maturation. They act individually and together to regulate their own expression and that of numerous other sporulation-specific genes. Binds promoters of target genes at brlA response elements (BREs) containing the conserved sequence 5'-(C/A)(A/G)AGGG(G/A)-3'. This chain is C2H2 type master regulator of conidiophore development brlA, found in Hapsidospora chrysogena (Acremonium chrysogenum).